The following is a 185-amino-acid chain: MILVIGLGNPGKEYQYTRHNIGFIAIEKIANQYNSSFSTKKQFNCEIAETISDGQKIIFIKPTTYMNLSGKSVISVKTYYNINPAKIFVIHDDIDLETCRIKFKTGGGNGGHNGLKSIDGVIGNNYNRIRVGVGRPKNNQDVADYLLNNFLQSEYEIAMQAIDRIVNNFDLILENKLEKFKNKIV.

Position 14 (Tyr-14) interacts with tRNA. Residue His-19 is the Proton acceptor of the active site. Residues Tyr-65, Asn-67, and Asn-113 each contribute to the tRNA site.

This sequence belongs to the PTH family. As to quaternary structure, monomer.

It is found in the cytoplasm. The enzyme catalyses an N-acyl-L-alpha-aminoacyl-tRNA + H2O = an N-acyl-L-amino acid + a tRNA + H(+). Functionally, hydrolyzes ribosome-free peptidyl-tRNAs (with 1 or more amino acids incorporated), which drop off the ribosome during protein synthesis, or as a result of ribosome stalling. In terms of biological role, catalyzes the release of premature peptidyl moieties from peptidyl-tRNA molecules trapped in stalled 50S ribosomal subunits, and thus maintains levels of free tRNAs and 50S ribosomes. This is Peptidyl-tRNA hydrolase from Rickettsia akari (strain Hartford).